A 181-amino-acid chain; its full sequence is GATA zinc finger domain-containing protein 22 (181 aa).

A GATA-type zinc finger spans residues 118–145 (CQICLTNNTPYWRWSVIENNKIRVCNRC).

This chain is GATA zinc finger domain-containing protein 22 (gtaV), found in Dictyostelium discoideum (Social amoeba).